The sequence spans 672 residues: MRSIRSFANDDRHVMVKHSTIYPSPEELEAVQNMVSTVECALKHVSDWLDETNKGTKTEGETEVKKDEAGENYSKDQGGRTLCGVMRIGLVAKGLLIKDDMDLELVLMCKDKPTETLLNTVKDNLPIQIQKLTEEKYQVEQCVNEASIIIRNTKEPTLTLKVILTSPLIRDELEKKDGENVSMKDPPDLLDRQKCLNALASLRHAKWFQARANGLKSCVIVLRILRDLCNRVPTWAPLKGWPLELICEKSIGTCNRPLGAGEALRRVMECLASGILLPGGPGLHDPCERDPTDALSYMTIQQKEDITHSAQHALRLSAFGQIYKVLEMDPLPSSKPFQKYSWSVTDKEGAGSSALKRPFEDGLGDDKDPNKKMKRNLRKILDSKAIDLMNALMRLNQIRPGLQYKLLSQSGPVHAPVFTMSVDVDGTTYEASGPSKKTAKLHVAVKVLQAMGYPTGFDADIECMSSDEKSDNESKNETVSSNSSNNTGNSTTETSSTLEVRTQGPILTASGKNPVMELNEKRRGLKYELISETGGSHDKRFVMEVEVDGQKFRGAGPNKKVAKASAALAALEKLFSGPNAANNKKKKIIPQAKGVVNTAVSAAVQAVRGRGRGTLTRGAFVGATAAPGYIAPGYGTPYGYSTAAPAYGLPKRMVLLPVMKFPTYPVPHYSFF.

The 359-residue stretch at 5–363 folds into the DZF domain; the sequence is RSFANDDRHV…ALKRPFEDGL (359 aa). Disordered stretches follow at residues 52 to 73 and 349 to 371; these read TNKG…GENY and GAGS…DPNK. Over residues 357 to 371 the composition is skewed to basic and acidic residues; sequence RPFEDGLGDDKDPNK. Residues 387–453 form the DRBM 1 domain; that stretch reads DLMNALMRLN…AVKVLQAMGY (67 aa). Residues 466-476 are compositionally biased toward basic and acidic residues; that stretch reads SDEKSDNESKN. The interval 466 to 499 is disordered; the sequence is SDEKSDNESKNETVSSNSSNNTGNSTTETSSTLE. Low complexity predominate over residues 477–497; that stretch reads ETVSSNSSNNTGNSTTETSST. Positions 510-576 constitute a DRBM 2 domain; it reads SGKNPVMELN…ALAALEKLFS (67 aa). An asymmetric dimethylarginine mark is found at arginine 612 and arginine 617.

In terms of assembly, interacts with EIF2AK2. Associates with microtubules; it is unsure whether such interaction is direct or indirect.

Its subcellular location is the cytoplasm. In terms of biological role, involved in spermatogenesis and sperm function. Plays a role in regulation of cell growth. Binds to double-stranded DNA and RNA. Binds most efficiently to poly(I:C) RNA than to poly(dI:dC) DNA. Binds also to single-stranded poly(G) RNA. Binds non-specifically to the mRNA PRM1 3'-UTR and adenovirus VA RNA. The protein is Spermatid perinuclear RNA-binding protein (STRBP) of Homo sapiens (Human).